We begin with the raw amino-acid sequence, 337 residues long: MDLDQIVADAQKAFAEASDVTTLENEKARFLGKSGALTELLKGLGKLDPETRKSEGARINLVKQQVEAALTARRQALADVLLNQRLAAEAIDVTLPGRGTGAGSLHPVMRTWERVEQIFRTIGFDVADGPEIETDWYNFTSLNSPENHPARSMQDTFYVDGKDADGRQLLLRTHTSPMQVRYARTNTPPIKVIVPGRTYRVDSDATHSPMFNQVEGLWIDENISFADLKGVYTDFLKKFFERDDILVRFRPSYFPFTEPSAEIDMLFETGKNAGKWLEISGSGQVHPTVIRNMGLDPDRYIGFAFGSGLERLTMLRYGVQDLRLFFENDLRFLRQFA.

Residue E258 coordinates Mg(2+).

It belongs to the class-II aminoacyl-tRNA synthetase family. Phe-tRNA synthetase alpha subunit type 1 subfamily. Tetramer of two alpha and two beta subunits. It depends on Mg(2+) as a cofactor.

Its subcellular location is the cytoplasm. The catalysed reaction is tRNA(Phe) + L-phenylalanine + ATP = L-phenylalanyl-tRNA(Phe) + AMP + diphosphate + H(+). This chain is Phenylalanine--tRNA ligase alpha subunit, found in Paraburkholderia phytofirmans (strain DSM 17436 / LMG 22146 / PsJN) (Burkholderia phytofirmans).